Here is a 228-residue protein sequence, read N- to C-terminus: Early nodulin-like protein 18 (228 aa).

Residues 1-26 (MSPSCSSCVNVLLIMCLMLLSLSADA) form the signal peptide. The Phytocyanin domain maps to 28–148 (KNYTVGESTG…GQHFMINVTH (121 aa)). N-linked (GlcNAc...) asparagine glycosylation is found at Asn-29, Asn-71, Asn-94, and Asn-145. Cys-86 and Cys-136 are oxidised to a cystine. The disordered stretch occupies residues 148 to 211 (HGQGLPDSSS…VHSKKSSSST (64 aa)). The segment covering 153–170 (PDSSSPDDAAAPGPSESS) has biased composition (low complexity). Residues 188-204 (DHPKDIESADDDKEVHS) are compositionally biased toward basic and acidic residues. Ser-204 is lipidated: GPI-anchor amidated serine. The propeptide at 205–228 (KKSSSSTTKTSLFCFVFMGLFASF) is removed in mature form.

It belongs to the early nodulin-like (ENODL) family. In terms of tissue distribution, mostly expressed in seedlings, roots and flowers, and, to a lower extent, in leaves, stems and seeds.

Its subcellular location is the cell membrane. Its function is as follows. May act as a carbohydrate transporter. The sequence is that of Early nodulin-like protein 18 from Arabidopsis thaliana (Mouse-ear cress).